The following is a 377-amino-acid chain: Protein RecA (377 aa).

76–83 is an ATP binding site; it reads GPESSGKT.

It belongs to the RecA family.

It is found in the cytoplasm. Functionally, can catalyze the hydrolysis of ATP in the presence of single-stranded DNA, the ATP-dependent uptake of single-stranded DNA by duplex DNA, and the ATP-dependent hybridization of homologous single-stranded DNAs. It interacts with LexA causing its activation and leading to its autocatalytic cleavage. This Corynebacterium aurimucosum (strain ATCC 700975 / DSM 44827 / CIP 107346 / CN-1) (Corynebacterium nigricans) protein is Protein RecA.